The sequence spans 270 residues: Transcription factor PU.1 (270 aa).

The segment at S123–T164 is disordered. 2 positions are modified to phosphoserine: S140 and S146. A compositionally biased stretch (low complexity) spans L153–T164. Residues I170–S253 constitute a DNA-binding region (ETS). Positions 217, 230, 233, and 243 each coordinate DNA.

The protein belongs to the ETS family. As to quaternary structure, binds DNA as a monomer. Can form homomers. Directly interacts with CEBPD/NF-IL6-beta; this interaction does not affect DNA-binding properties of each partner. Interacts with NONO/p54(nrb). Interacts with RUNX1/AML1. Interacts with GFI1; the interaction represses SPI1 transcriptional activity, hence blocks SPI1-induced macrophage differentiation of myeloid progenitor cells. Interacts with CEBPE. Interacts with IRF4/Pip and IRF8. Interacts with JUN. Interacts with RB1. Interacts with TBP. In the bone marrow, concentrated in hematopoietic stem cell, lymphoid progenitor, myeloid lineage (granulocyte macrophage progenitors, classical dendritic cells, monocytes) and B-cell clusters. Among B-cells, predominantly expressed in pre-B1 cells. Expressed in germinal center B-cells.

The protein localises to the nucleus. Transcriptional activity at macrophage-specific genes is inhibited by interaction with GFI1, which results in the inhibition of SPI1-induced macrophage differentiation of myeloid progenitor cells, but not that of the granulocyte lineage. In terms of biological role, pioneer transcription factor, which controls hematopoietic cell fate by decompacting stem cell heterochromatin and allowing other transcription factors to enter otherwise inaccessible genomic sites. Once in open chromatin, can directly control gene expression by binding genetic regulatory elements and can also more broadly influence transcription by recruiting transcription factors, such as interferon regulatory factors (IRFs), to otherwise inaccessible genomic regions. Transcriptionally activates genes important for myeloid and lymphoid lineages, such as CSF1R. Transcriptional activation from certain promoters, possibly containing low affinity binding sites, is achieved cooperatively with other transcription factors. FCER1A transactivation is achieved in cooperation with GATA1. May be particularly important for the pro- to pre-B cell transition. Binds (via the ETS domain) onto the purine-rich DNA core sequence 5'-GAGGAA-3', also known as the PU-box. In vitro can bind RNA and interfere with pre-mRNA splicing. This chain is Transcription factor PU.1 (SPI1), found in Homo sapiens (Human).